A 291-amino-acid polypeptide reads, in one-letter code: Ribosomal RNA small subunit methyltransferase A (291 aa).

6 residues coordinate S-adenosyl-L-methionine: histidine 37, leucine 39, glycine 64, glutamate 85, aspartate 110, and asparagine 131.

Belongs to the class I-like SAM-binding methyltransferase superfamily. rRNA adenine N(6)-methyltransferase family. RsmA subfamily.

The protein resides in the cytoplasm. The catalysed reaction is adenosine(1518)/adenosine(1519) in 16S rRNA + 4 S-adenosyl-L-methionine = N(6)-dimethyladenosine(1518)/N(6)-dimethyladenosine(1519) in 16S rRNA + 4 S-adenosyl-L-homocysteine + 4 H(+). Specifically dimethylates two adjacent adenosines (A1518 and A1519) in the loop of a conserved hairpin near the 3'-end of 16S rRNA in the 30S particle. May play a critical role in biogenesis of 30S subunits. The chain is Ribosomal RNA small subunit methyltransferase A from Dehalococcoides mccartyi (strain CBDB1).